A 688-amino-acid polypeptide reads, in one-letter code: Protein sel-1 homolog 2 (688 aa).

The signal sequence occupies residues 1–18 (MNPLALLVEILIIIEVTT). Over 19–662 (KNSEAERYNR…KWKWLKLDST (644 aa)) the chain is Extracellular. Asn-34 is a glycosylation site (N-linked (GlcNAc...) asparagine). Sel1-like repeat units lie at residues 107–142 (GDEL…DMGN), 143–178 (LKAM…KEGS), 179–214 (YKAQ…AGGS), 215–250 (MMSQ…DYIA), 297–333 (VQIQ…KAGS), 334–370 (ANAM…SKGN), 371–406 (AIGL…EKGW), 407–442 (PNAQ…QSGQ), 443–478 (PLAI…ELGH), 551–586 (AFAR…DKHH), and 588–623 (AQAM…QTSP). The N-linked (GlcNAc...) asparagine glycan is linked to Asn-162. The chain crosses the membrane as a helical span at residues 663–683 (IGPYWDLLVIGLIVVVLIFLL). At 684 to 688 (RNHHR) the chain is on the cytoplasmic side.

This sequence belongs to the sel-1 family.

Its subcellular location is the membrane. It is found in the cell projection. The protein resides in the cilium. The protein localises to the nucleus speckle. This is Protein sel-1 homolog 2 (Sel1l2) from Rattus norvegicus (Rat).